The primary structure comprises 330 residues: Diacylglycerol O-acyltransferase 2 (330 aa).

The next 2 helical transmembrane spans lie at 15-35 (LETM…IMAF) and 37-57 (LIVI…MFYF).

The protein belongs to the diacylglycerol acyltransferase family.

Its subcellular location is the endoplasmic reticulum membrane. The catalysed reaction is an acyl-CoA + a 1,2-diacyl-sn-glycerol = a triacyl-sn-glycerol + CoA. It carries out the reaction all-trans-retinol + an acyl-CoA = an all-trans-retinyl ester + CoA. The enzyme catalyses 2-(9Z-octadecenoyl)-glycerol + (9Z)-octadecenoyl-CoA = 1,2-di-(9Z-octadecenoyl)-sn-glycerol + CoA. It catalyses the reaction 1,2-di-(9Z-octadecenoyl)-sn-glycerol + (9Z)-octadecenoyl-CoA = 1,2,3-tri-(9Z-octadecenoyl)-glycerol + CoA. The catalysed reaction is all-trans-retinol + hexadecanoyl-CoA = all-trans-retinyl hexadecanoate + CoA. It carries out the reaction 1-O-(9Z-octadecenyl)-glycerol + (9Z)-octadecenoyl-CoA = 1-O-(9Z-octadecyl)-3-(9Z-octadecenoyl)-glycerol + CoA. The enzyme catalyses 1-(9Z-octadecenoyl)-glycerol + (9Z)-octadecenoyl-CoA = 1,2-di-(9Z-octadecenoyl)-glycerol + CoA. It catalyses the reaction 1,2-di-(9Z-octadecenoyl)-sn-glycerol + hexadecanoyl-CoA = 1,2-di-(9Z)-octadecenoyl-3-hexadecanoyl-sn-glycerol + CoA. The catalysed reaction is 1,3-di-(9Z-octadecenoyl)-glycerol + (9Z)-octadecenoyl-CoA = 1,2,3-tri-(9Z-octadecenoyl)-glycerol + CoA. It carries out the reaction 2,3-di-(9Z)-octadecenoyl-sn-glycerol + (9Z)-octadecenoyl-CoA = 1,2,3-tri-(9Z-octadecenoyl)-glycerol + CoA. The enzyme catalyses 2-(9Z-octadecenoyl)-glycerol + hexadecanoyl-CoA = 1-hexadecanoyl-2-(9Z-octadecenoyl)-sn-glycerol + CoA. The protein operates within glycerolipid metabolism; triacylglycerol biosynthesis. Its function is as follows. Catalyzes the terminal and only committed step in triacylglycerol synthesis by using diacylglycerol and fatty acyl CoA as substrates. Required for storage lipid synthesis. In Dictyostelium discoideum (Social amoeba), this protein is Diacylglycerol O-acyltransferase 2 (dgat2).